The sequence spans 498 residues: L-amino acid oxidase (498 aa).

Residues 1–11 (SLLFLAAVGSC) form the signal peptide. Cys21 and Cys184 are oxidised to a cystine. Residues 54-55 (MS), 74-75 (EA), 74-78 (EASER), Arg82, and 98-101 (GPMR) each bind FAD. Residue Arg101 participates in substrate binding. The N-linked (GlcNAc...) asparagine glycan is linked to Asn183. His234 contacts substrate. Position 272 (Val272) interacts with FAD. Cys342 and Cys423 are oxidised to a cystine. Tyr383 is a binding site for substrate. FAD-binding positions include Glu468, 475 to 480 (GWIDST), and 476 to 480 (WIDST). 475–476 (GW) contributes to the substrate binding site.

This sequence belongs to the flavin monoamine oxidase family. FIG1 subfamily. In terms of assembly, homodimer; non-covalently linked. The cofactor is FAD. In terms of processing, N-glycosylated. Contains 18.73% carbohydrates. In terms of tissue distribution, expressed by the venom gland.

Its subcellular location is the secreted. It catalyses the reaction an L-alpha-amino acid + O2 + H2O = a 2-oxocarboxylate + H2O2 + NH4(+). The catalysed reaction is L-leucine + O2 + H2O = 4-methyl-2-oxopentanoate + H2O2 + NH4(+). Its activity is regulated as follows. Strongly inhibited by glutathione, and moderately inhibited by PMSF, acetate iodine and glutamic acid. Is also inhibited by Zn(2+) ions, but not by Ca(2+), Mg(2+) and Mn(2+). Its function is as follows. Catalyzes an oxidative deamination of predominantly hydrophobic and aromatic L-amino acids, thus producing hydrogen peroxide that may contribute to the diverse toxic effects of this enzyme. This enzyme shows activity on L-Leu. This enzyme inhibits platelet aggregation in human platelet rich plasma induced by ADP (IC(50)=3.2 mg/mL), and shows antibacterial activities on both Gram-positive and Gram-negative bacteria (P.aeruginosa, V.cholerae, S.aureus, E.faecalis and E.coli). These two effects are due to hydrogen peroxide, since they are inhibited by catalase. It also induces edema in mouse paw pads but does not show hemolytic activity. This protein may also have activities in hemorrhage, and apoptosis. The chain is L-amino acid oxidase from Bothrops pictus (Desert lancehead).